Here is a 423-residue protein sequence, read N- to C-terminus: Serine hydroxymethyltransferase (423 aa).

(6S)-5,6,7,8-tetrahydrofolate-binding positions include Leu120 and 124 to 126; that span reads GHL. An N6-(pyridoxal phosphate)lysine modification is found at Lys229. (6S)-5,6,7,8-tetrahydrofolate-binding positions include Glu245 and 353–355; that span reads SPF.

It belongs to the SHMT family. As to quaternary structure, homodimer. It depends on pyridoxal 5'-phosphate as a cofactor.

The protein resides in the cytoplasm. It carries out the reaction (6R)-5,10-methylene-5,6,7,8-tetrahydrofolate + glycine + H2O = (6S)-5,6,7,8-tetrahydrofolate + L-serine. It functions in the pathway one-carbon metabolism; tetrahydrofolate interconversion. The protein operates within amino-acid biosynthesis; glycine biosynthesis; glycine from L-serine: step 1/1. In terms of biological role, catalyzes the reversible interconversion of serine and glycine with tetrahydrofolate (THF) serving as the one-carbon carrier. This reaction serves as the major source of one-carbon groups required for the biosynthesis of purines, thymidylate, methionine, and other important biomolecules. Also exhibits THF-independent aldolase activity toward beta-hydroxyamino acids, producing glycine and aldehydes, via a retro-aldol mechanism. In Prochlorococcus marinus (strain MIT 9312), this protein is Serine hydroxymethyltransferase.